The chain runs to 357 residues: Probable butyrate kinase 1 (357 aa).

The protein belongs to the acetokinase family.

It is found in the cytoplasm. It carries out the reaction butanoate + ATP = butanoyl phosphate + ADP. The sequence is that of Probable butyrate kinase 1 from Thermotoga maritima (strain ATCC 43589 / DSM 3109 / JCM 10099 / NBRC 100826 / MSB8).